The primary structure comprises 387 residues: 3-ketoacyl-CoA thiolase (387 aa).

Cysteine 91 (acyl-thioester intermediate) is an active-site residue. Active-site proton acceptor residues include histidine 343 and cysteine 373.

This sequence belongs to the thiolase-like superfamily. Thiolase family. Heterotetramer of two alpha chains (FadB) and two beta chains (FadA).

Its subcellular location is the cytoplasm. It catalyses the reaction an acyl-CoA + acetyl-CoA = a 3-oxoacyl-CoA + CoA. Its pathway is lipid metabolism; fatty acid beta-oxidation. Catalyzes the final step of fatty acid oxidation in which acetyl-CoA is released and the CoA ester of a fatty acid two carbons shorter is formed. The sequence is that of 3-ketoacyl-CoA thiolase from Aeromonas hydrophila subsp. hydrophila (strain ATCC 7966 / DSM 30187 / BCRC 13018 / CCUG 14551 / JCM 1027 / KCTC 2358 / NCIMB 9240 / NCTC 8049).